The primary structure comprises 362 residues: Methylthioribose-1-phosphate isomerase (362 aa).

Substrate is bound by residues 53–55 (RGA), Arg90, and Gln201. Asp242 serves as the catalytic Proton donor. 252–253 (NK) serves as a coordination point for substrate.

The protein belongs to the eIF-2B alpha/beta/delta subunits family. MtnA subfamily.

The enzyme catalyses 5-(methylsulfanyl)-alpha-D-ribose 1-phosphate = 5-(methylsulfanyl)-D-ribulose 1-phosphate. Its pathway is amino-acid biosynthesis; L-methionine biosynthesis via salvage pathway; L-methionine from S-methyl-5-thio-alpha-D-ribose 1-phosphate: step 1/6. Functionally, catalyzes the interconversion of methylthioribose-1-phosphate (MTR-1-P) into methylthioribulose-1-phosphate (MTRu-1-P). The sequence is that of Methylthioribose-1-phosphate isomerase from Paramagnetospirillum magneticum (strain ATCC 700264 / AMB-1) (Magnetospirillum magneticum).